Reading from the N-terminus, the 346-residue chain is tRNA N6-adenosine threonylcarbamoyltransferase (346 aa).

Residues H109, H113, and Y135 each contribute to the Fe cation site. Residues 135–139, D167, G180, E184, and N263 contribute to the substrate site; that span reads YVSGG. A Fe cation-binding site is contributed by D291.

This sequence belongs to the KAE1 / TsaD family. As to quaternary structure, monomer. Component of the KEOPS complex that consists of Kae1, Bud32, Cgi121 and Pcc1; the whole complex dimerizes. It depends on Fe(2+) as a cofactor.

It is found in the cytoplasm. It carries out the reaction L-threonylcarbamoyladenylate + adenosine(37) in tRNA = N(6)-L-threonylcarbamoyladenosine(37) in tRNA + AMP + H(+). Required for the formation of a threonylcarbamoyl group on adenosine at position 37 (t(6)A37) in tRNAs that read codons beginning with adenine. Is a component of the KEOPS complex that is probably involved in the transfer of the threonylcarbamoyl moiety of threonylcarbamoyl-AMP (TC-AMP) to the N6 group of A37. Kae1 likely plays a direct catalytic role in this reaction, but requires other protein(s) of the complex to fulfill this activity. The sequence is that of tRNA N6-adenosine threonylcarbamoyltransferase from Methanopyrus kandleri (strain AV19 / DSM 6324 / JCM 9639 / NBRC 100938).